The following is a 971-amino-acid chain: GEM-interacting protein (971 aa).

Residue Ser19 is modified to Phosphoserine. Disordered regions lie at residues 41-79 (AGDPVRREDLEPDKADTATVVTEENSEASSWRDLSPEGP), 231-267 (LRARSQGSPEDPPSQASPGSNKQQERRRRSREEAQAK), and 383-476 (DTKK…IENG). Positions 44–56 (PVRREDLEPDKAD) are enriched in basic and acidic residues. A compositionally biased stretch (polar residues) spans 59–69 (TVVTEENSEAS). 6 positions are modified to phosphoserine: Ser75, Ser235, Ser238, Ser247, Ser436, and Ser440. The F-BAR domain maps to 85–348 (EELDLRLIRT…CCVPFEPGQR (264 aa)). Acidic residues predominate over residues 458-471 (SSDDFEERDPDLGD). Residues 492-536 (THRLRRLRGPAKCRECEAFMVSGTECEECFLTCHKRCLETLLILC) form a Phorbol-ester/DAG-type zinc finger. A Rho-GAP domain is found at 553–756 (LQLPRDFPEE…FLIVHYEQIF (204 aa)). Residue Thr659 is modified to Phosphothreonine. The segment at 799–865 (IALDSSPDPK…LGAQSRGHFS (67 aa)) is disordered. The segment covering 805–817 (PDPKHHSALEKCP) has biased composition (basic and acidic residues). Phosphoserine is present on residues Ser884, Ser908, and Ser924.

As to quaternary structure, interacts with GEM through its N-terminal.

Its function is as follows. Stimulates, in vitro and in vivo, the GTPase activity of RhoA. This is GEM-interacting protein (Gmip) from Mus musculus (Mouse).